The sequence spans 252 residues: Cell division protein ZapD (252 aa).

It belongs to the ZapD family. Interacts with FtsZ.

It localises to the cytoplasm. In terms of biological role, cell division factor that enhances FtsZ-ring assembly. Directly interacts with FtsZ and promotes bundling of FtsZ protofilaments, with a reduction in FtsZ GTPase activity. The polypeptide is Cell division protein ZapD (Cupriavidus necator (strain ATCC 17699 / DSM 428 / KCTC 22496 / NCIMB 10442 / H16 / Stanier 337) (Ralstonia eutropha)).